The primary structure comprises 343 residues: DNA-directed RNA polymerase subunit alpha (343 aa).

Positions 1–239 (MGETVTIQKN…DQLNVFVNFE (239 aa)) are alpha N-terminal domain (alpha-NTD). The alpha C-terminal domain (alpha-CTD) stretch occupies residues 255-343 (FNPAFLKKVD…ELAKRFEDHY (89 aa)).

Belongs to the RNA polymerase alpha chain family. Homodimer. The RNAP catalytic core consists of 2 alpha, 1 beta, 1 beta' and 1 omega subunit. When a sigma factor is associated with the core the holoenzyme is formed, which can initiate transcription.

The catalysed reaction is RNA(n) + a ribonucleoside 5'-triphosphate = RNA(n+1) + diphosphate. DNA-dependent RNA polymerase catalyzes the transcription of DNA into RNA using the four ribonucleoside triphosphates as substrates. The sequence is that of DNA-directed RNA polymerase subunit alpha from Bradyrhizobium diazoefficiens (strain JCM 10833 / BCRC 13528 / IAM 13628 / NBRC 14792 / USDA 110).